The sequence spans 116 residues: Co-chaperonin GroES (116 aa).

It belongs to the GroES chaperonin family. Heptamer of 7 subunits arranged in a ring. Interacts with the chaperonin GroEL.

It is found in the cytoplasm. Together with the chaperonin GroEL, plays an essential role in assisting protein folding. The GroEL-GroES system forms a nano-cage that allows encapsulation of the non-native substrate proteins and provides a physical environment optimized to promote and accelerate protein folding. GroES binds to the apical surface of the GroEL ring, thereby capping the opening of the GroEL channel. In Mycoplasma pneumoniae (strain ATCC 29342 / M129 / Subtype 1) (Mycoplasmoides pneumoniae), this protein is Co-chaperonin GroES.